The primary structure comprises 231 residues: NADH-ubiquinone oxidoreductase chain 4 (231 aa).

A run of 6 helical transmembrane segments spans residues 1 to 21 (PIAGSMVLAAILLKLGGYGII), 34 to 54 (MFIPFIVLALWGAILANLTCL), 63 to 85 (IAYSSISHMGLVVATIIIQTPWG), 89 to 111 (AMALMIAHGFTSSALFCLANTTY), 128 to 148 (ILPMTTTWWLLANLMNIAMPP), and 169 to 189 (TIIMLGLSMLITASYSLHMFL).

Belongs to the complex I subunit 4 family.

Its subcellular location is the mitochondrion membrane. It carries out the reaction a ubiquinone + NADH + 5 H(+)(in) = a ubiquinol + NAD(+) + 4 H(+)(out). Its function is as follows. Core subunit of the mitochondrial membrane respiratory chain NADH dehydrogenase (Complex I) that is believed to belong to the minimal assembly required for catalysis. Complex I functions in the transfer of electrons from NADH to the respiratory chain. The immediate electron acceptor for the enzyme is believed to be ubiquinone. The protein is NADH-ubiquinone oxidoreductase chain 4 (MT-ND4) of Lachesis muta muta (Bushmaster).